Consider the following 214-residue polypeptide: S-crystallin 1 (214 aa).

The GST N-terminal domain maps to 2–79 (PSYTLHYFNH…YLAREFGFHG (78 aa)). Positions 81–214 (NNMEMARVDF…YLQRRCRTDF (134 aa)) constitute a GST C-terminal domain.

The protein belongs to the GST superfamily. As to expression, lens.

S-crystallins are structural components of squids and octopi eye lens. Contains relatively little GST activity (1/1000 of that of mammalian GST enzyme). This chain is S-crystallin 1 (OCTS1), found in Octopus vulgaris (Common octopus).